Reading from the N-terminus, the 482-residue chain is ATP synthase subunit beta (482 aa).

161–168 (GGAGVGKT) serves as a coordination point for ATP.

It belongs to the ATPase alpha/beta chains family. In terms of assembly, F-type ATPases have 2 components, CF(1) - the catalytic core - and CF(0) - the membrane proton channel. CF(1) has five subunits: alpha(3), beta(3), gamma(1), delta(1), epsilon(1). CF(0) has four main subunits: a(1), b(1), b'(1) and c(9-12).

It is found in the cellular thylakoid membrane. The catalysed reaction is ATP + H2O + 4 H(+)(in) = ADP + phosphate + 5 H(+)(out). In terms of biological role, produces ATP from ADP in the presence of a proton gradient across the membrane. The catalytic sites are hosted primarily by the beta subunits. The protein is ATP synthase subunit beta of Gloeothece citriformis (strain PCC 7424) (Cyanothece sp. (strain PCC 7424)).